The following is a 434-amino-acid chain: Gamma-glutamyl phosphate reductase (434 aa).

This sequence belongs to the gamma-glutamyl phosphate reductase family.

The protein localises to the cytoplasm. It carries out the reaction L-glutamate 5-semialdehyde + phosphate + NADP(+) = L-glutamyl 5-phosphate + NADPH + H(+). The protein operates within amino-acid biosynthesis; L-proline biosynthesis; L-glutamate 5-semialdehyde from L-glutamate: step 2/2. Its function is as follows. Catalyzes the NADPH-dependent reduction of L-glutamate 5-phosphate into L-glutamate 5-semialdehyde and phosphate. The product spontaneously undergoes cyclization to form 1-pyrroline-5-carboxylate. The polypeptide is Gamma-glutamyl phosphate reductase (Nostoc sp. (strain PCC 7120 / SAG 25.82 / UTEX 2576)).